A 341-amino-acid chain; its full sequence is Methionine import ATP-binding protein MetN 2 (341 aa).

The region spanning 2–241 (IQFKNISKHY…PQHPTTKTFI (240 aa)) is the ABC transporter domain. 38-45 (GYSGAGKS) contacts ATP.

Belongs to the ABC transporter superfamily. Methionine importer (TC 3.A.1.24) family. The complex is composed of two ATP-binding proteins (MetN), two transmembrane proteins (MetI) and a solute-binding protein (MetQ).

It is found in the cell inner membrane. The catalysed reaction is L-methionine(out) + ATP + H2O = L-methionine(in) + ADP + phosphate + H(+). It carries out the reaction D-methionine(out) + ATP + H2O = D-methionine(in) + ADP + phosphate + H(+). In terms of biological role, part of the ABC transporter complex MetNIQ involved in methionine import. Responsible for energy coupling to the transport system. This is Methionine import ATP-binding protein MetN 2 from Acinetobacter baylyi (strain ATCC 33305 / BD413 / ADP1).